Here is a 1090-residue protein sequence, read N- to C-terminus: UPF0507 protein EC1118_1M3_1541g (1090 aa).

One can recognise a VPS9 domain in the interval 289–436 (FSVNQLLTDF…FEDFNKNTGN (148 aa)).

It belongs to the UPF0507 family.

This Saccharomyces cerevisiae (strain Lalvin EC1118 / Prise de mousse) (Baker's yeast) protein is UPF0507 protein EC1118_1M3_1541g.